Here is a 368-residue protein sequence, read N- to C-terminus: Histidinol-phosphate aminotransferase (368 aa).

N6-(pyridoxal phosphate)lysine is present on Lys-215.

This sequence belongs to the class-II pyridoxal-phosphate-dependent aminotransferase family. Histidinol-phosphate aminotransferase subfamily. In terms of assembly, homodimer. It depends on pyridoxal 5'-phosphate as a cofactor.

It carries out the reaction L-histidinol phosphate + 2-oxoglutarate = 3-(imidazol-4-yl)-2-oxopropyl phosphate + L-glutamate. The protein operates within amino-acid biosynthesis; L-histidine biosynthesis; L-histidine from 5-phospho-alpha-D-ribose 1-diphosphate: step 7/9. This chain is Histidinol-phosphate aminotransferase (hisC), found in Buchnera aphidicola subsp. Acyrthosiphon pisum (strain APS) (Acyrthosiphon pisum symbiotic bacterium).